The sequence spans 302 residues: 33 kDa chaperonin (302 aa).

2 disulfides stabilise this stretch: Cys234–Cys236 and Cys267–Cys270.

This sequence belongs to the HSP33 family. In terms of processing, under oxidizing conditions two disulfide bonds are formed involving the reactive cysteines. Under reducing conditions zinc is bound to the reactive cysteines and the protein is inactive.

The protein resides in the cytoplasm. Redox regulated molecular chaperone. Protects both thermally unfolding and oxidatively damaged proteins from irreversible aggregation. Plays an important role in the bacterial defense system toward oxidative stress. This is 33 kDa chaperonin from Neisseria gonorrhoeae (strain NCCP11945).